The following is a 394-amino-acid chain: MNPLATLEQGLADIDAQGLRRCRRVADTACGAHMTVDGRAIIGFASNDYLGLAAHPRLVEAFAEGARRYGSGSGGSHLLGGHSRAHATLEDQLAAFSGGFSDAPRALYFSTGYMANLAALTALAGRGATIFSDALNHASLIDGARLSRANVQIYPHGDADALDARLRACDAPTKLIVSDTVFSMDGDVAPLARLVALAETHGAWLVVDDAHGFGVLGPQGRGALAAHGLRSPNLVYVGTLGKAAGVAGAFVVAHETVIEWLVQRARSYIFTTAAPPSVACAVSASLAVIASDEGDARRAHLGALIKRTRAILRATHWQPVDSHTAVQPLVIGSNEATLAAMAALDAQGLWVPAIRPPTVPAGTSRLRISLSAAHSFDDLARLEAALVTPIGAAA.

R21 lines the substrate pocket. Position 112–113 (112–113 (GY)) interacts with pyridoxal 5'-phosphate. H137 contacts substrate. Positions 183, 211, and 239 each coordinate pyridoxal 5'-phosphate. K242 bears the N6-(pyridoxal phosphate)lysine mark. T358 is a substrate binding site.

It belongs to the class-II pyridoxal-phosphate-dependent aminotransferase family. BioF subfamily. As to quaternary structure, homodimer. The cofactor is pyridoxal 5'-phosphate.

The catalysed reaction is 6-carboxyhexanoyl-[ACP] + L-alanine + H(+) = (8S)-8-amino-7-oxononanoate + holo-[ACP] + CO2. The protein operates within cofactor biosynthesis; biotin biosynthesis. Catalyzes the decarboxylative condensation of pimeloyl-[acyl-carrier protein] and L-alanine to produce 8-amino-7-oxononanoate (AON), [acyl-carrier protein], and carbon dioxide. The protein is 8-amino-7-oxononanoate synthase of Burkholderia pseudomallei (strain 1710b).